The primary structure comprises 369 residues: MANVTLSSVYKAFGEAVISRDINLEIDDGEFVVFVGPSGCGKSTLLRMIAGLEDITSGELLIGGKRMNEVPPSERGIGMVFQSYALYPHLSVAENMSFGLKLAGVKKAEIYQRVNQVAEVLQLAHLLDRRPKALSGGQRQRVAIGRTLVSEPDVFLLDEPLSNLDAALRVQMRIEISRLHKRLERTMIYVTHDQVEAMTLADKIVVLDAGNIAQVGKPLELYHYPANRFVAGFIGSPKMNFLPVKVTAAEPRQVQIELPNHQRVWLPVEGDQVQVGANMSLGIRPEHLLPSSASEVTLEGEIQVVEQLGNETQIHIQIPAIRQNLVYRQNDVVLVEEGATFSIGLPPHRCHLFREDGTACKRLYQELGV.

An ABC transporter domain is found at 4–234 (VTLSSVYKAF…PANRFVAGFI (231 aa)). Position 36–43 (36–43 (GPSGCGKS)) interacts with ATP.

This sequence belongs to the ABC transporter superfamily. Maltooligosaccharide importer (TC 3.A.1.1.1) family. As to quaternary structure, the complex is composed of two ATP-binding proteins (MalK), two transmembrane proteins (MalG and MalK) and a solute-binding protein (MalE).

The protein localises to the cell inner membrane. The enzyme catalyses D-maltose(out) + ATP + H2O = D-maltose(in) + ADP + phosphate + H(+). Functionally, part of the ABC transporter complex MalEFGK involved in maltose/maltodextrin import. Responsible for energy coupling to the transport system. The polypeptide is Maltose/maltodextrin import ATP-binding protein MalK (Yersinia pestis bv. Antiqua (strain Antiqua)).